Here is a 332-residue protein sequence, read N- to C-terminus: tRNA dimethylallyltransferase 2 (332 aa).

Residue 15 to 22 participates in ATP binding; the sequence is GPTASGKT. 17-22 lines the substrate pocket; the sequence is TASGKT. Interaction with substrate tRNA regions lie at residues 40–43 and 164–168; these read DSVM and QRIQR.

Belongs to the IPP transferase family. Monomer. Requires Mg(2+) as cofactor.

The catalysed reaction is adenosine(37) in tRNA + dimethylallyl diphosphate = N(6)-dimethylallyladenosine(37) in tRNA + diphosphate. Catalyzes the transfer of a dimethylallyl group onto the adenine at position 37 in tRNAs that read codons beginning with uridine, leading to the formation of N6-(dimethylallyl)adenosine (i(6)A). The protein is tRNA dimethylallyltransferase 2 of Hahella chejuensis (strain KCTC 2396).